A 129-amino-acid chain; its full sequence is Fluoride-specific ion channel FluC 2 (129 aa).

A helical membrane pass occupies residues 19–39 (GLGLVVPAAAVGGFPLGTLFI). The Na(+) site is built by Gly74 and Thr77. Residues 95–115 (FGMAAVYIAASLFGGLLASWA) traverse the membrane as a helical segment.

This sequence belongs to the fluoride channel Fluc/FEX (TC 1.A.43) family.

The protein localises to the cell membrane. The enzyme catalyses fluoride(in) = fluoride(out). Na(+) is not transported, but it plays an essential structural role and its presence is essential for fluoride channel function. In terms of biological role, fluoride-specific ion channel. Important for reducing fluoride concentration in the cell, thus reducing its toxicity. The chain is Fluoride-specific ion channel FluC 2 from Geobacillus kaustophilus (strain HTA426).